The chain runs to 305 residues: tRNA pseudouridine synthase B (305 aa).

D39 serves as the catalytic Nucleophile. The PUA domain maps to 237-305 (LPVIIVPGEF…FLLKPHKVLK (69 aa)).

Belongs to the pseudouridine synthase TruB family. Type 1 subfamily.

The enzyme catalyses uridine(55) in tRNA = pseudouridine(55) in tRNA. In terms of biological role, responsible for synthesis of pseudouridine from uracil-55 in the psi GC loop of transfer RNAs. This is tRNA pseudouridine synthase B from Moorella thermoacetica (strain ATCC 39073 / JCM 9320).